The sequence spans 246 residues: tRNA (guanine-N(7)-)-methyltransferase (246 aa).

The segment at 1–26 (MSDSSSSSENAPATPESPGRPPRGIK) is disordered. Residues E74, E99, D126, and D149 each contribute to the S-adenosyl-L-methionine site. Residue D149 is part of the active site. Substrate contacts are provided by residues K153, D185, and 224 to 227 (TKFE).

The protein belongs to the class I-like SAM-binding methyltransferase superfamily. TrmB family.

The enzyme catalyses guanosine(46) in tRNA + S-adenosyl-L-methionine = N(7)-methylguanosine(46) in tRNA + S-adenosyl-L-homocysteine. The protein operates within tRNA modification; N(7)-methylguanine-tRNA biosynthesis. Catalyzes the formation of N(7)-methylguanine at position 46 (m7G46) in tRNA. In Chromohalobacter salexigens (strain ATCC BAA-138 / DSM 3043 / CIP 106854 / NCIMB 13768 / 1H11), this protein is tRNA (guanine-N(7)-)-methyltransferase.